The following is a 450-amino-acid chain: Asparagine--tRNA ligase (450 aa).

The protein belongs to the class-II aminoacyl-tRNA synthetase family. In terms of assembly, homodimer.

The protein localises to the cytoplasm. The enzyme catalyses tRNA(Asn) + L-asparagine + ATP = L-asparaginyl-tRNA(Asn) + AMP + diphosphate + H(+). This chain is Asparagine--tRNA ligase, found in Enterococcus faecalis (strain ATCC 700802 / V583).